The following is an 892-amino-acid chain: Protein argonaute 11 (892 aa).

Gly residues predominate over residues 1 to 17; the sequence is MSSRGGGVGGRRGGPGG. Disordered regions lie at residues 1–68 and 86–117; these read MSSR…ALQP and MEAREGASSSSSASAPAVGEVEPPSRAVGALP. Residues 86–107 show a composition bias toward low complexity; the sequence is MEAREGASSSSSASAPAVGEVE. One can recognise a PAZ domain in the interval 248–362; sequence SLKQFLAGTY…LPMEVCRIVK (115 aa). The Piwi domain occupies 541–848; the sequence is LLVIVLPDAN…AASRARHYLE (308 aa). Positions 850-876 are disordered; it reads GSLPDHGSSSASAAGGSRRNDRGVPVK. Low complexity predominate over residues 856–866; the sequence is GSSSASAAGGS. Over residues 867-876 the composition is skewed to basic and acidic residues; the sequence is RRNDRGVPVK.

This sequence belongs to the argonaute family. Ago subfamily.

Probably involved in the RNA silencing pathway. May bind to short RNAs such as microRNAs (miRNAs) or short interfering RNAs (siRNAs), and represses the translation of mRNAs which are complementary to them. This chain is Protein argonaute 11 (AGO11), found in Oryza sativa subsp. japonica (Rice).